Reading from the N-terminus, the 519-residue chain is Serine/threonine-protein kinase RIO3 (519 aa).

Phosphoserine occurs at positions 8, 112, 125, 127, and 128. The interval 122-159 (FEDSDSSEDEVDWQDTRDDPYRPAKPIPTPKKGFIGKG) is disordered. Residues 124 to 134 (DSDSSEDEVDW) are compositionally biased toward acidic residues. In terms of domain architecture, Protein kinase spans 251–519 (ETITGCISTG…DGSPPVLSAD (269 aa)). ATP contacts are provided by residues 257-265 (ISTGKESVV) and lysine 290. The active-site Proton acceptor is the aspartate 406. At serine 512 the chain carries Phosphoserine.

It belongs to the protein kinase superfamily. RIO-type Ser/Thr kinase family. As to quaternary structure, interacts with CASP10. Interacts with IRF3; RIOK3 probably mediates the interaction of TBK1 with IRF3. Associated with 40S pre-ribosomal particles. It depends on Mg(2+) as a cofactor. Post-translationally, autophosphorylated (in vitro).

The protein resides in the cytoplasm. The catalysed reaction is L-seryl-[protein] + ATP = O-phospho-L-seryl-[protein] + ADP + H(+). It carries out the reaction L-threonyl-[protein] + ATP = O-phospho-L-threonyl-[protein] + ADP + H(+). In terms of biological role, involved in regulation of type I interferon (IFN)-dependent immune response which plays a critical role in the innate immune response against DNA and RNA viruses. May act as an adapter protein essential for the recruitment of TBK1 to IRF3. Phosphorylates IFIH1 on 'Ser-828' interfering with IFIH1 filament assembly on long dsRNA and resulting in attenuated IFIH1-signaling. Can inhibit CASP10 isoform 7-mediated activation of the NF-kappaB signaling pathway. May play a role in the biogenesis of the 40S ribosomal subunit. Involved in the processing of 21S pre-rRNA to the mature 18S rRNA. The protein is Serine/threonine-protein kinase RIO3 (Riok3) of Mus musculus (Mouse).